Consider the following 668-residue polypeptide: Small ribosomal subunit protein mS81 (rPPR8) (668 aa).

A mitochondrion-targeting transit peptide spans 1 to 36; it reads MRYQQWRLMLLRSYHRSHLPYLSPCSQVTSISSRSF. PPR repeat units follow at residues 286–320, 321–355, 396–430, 431–465, 466–496, 502–537, and 543–577; these read DEKT…GYEV, EIET…SSSS, TDSL…GYVP, SGDM…GNNL, DDKA…MVGN, ADYS…QLKP, and KSLV…GFPP.

This sequence belongs to the PPR family. P subfamily. As to quaternary structure, component of the mitochondrial ribosome small subunit.

The protein resides in the mitochondrion. This is Small ribosomal subunit protein mS81 (rPPR8) from Arabidopsis thaliana (Mouse-ear cress).